Consider the following 428-residue polypeptide: MRVVILGSGVVGVASAYYLARAGHEVTVIDREAGPALETSFANAGQISPGYAAPWAAPGVPLKAVKWMFEKHAPLAIRLDGTRFQLQWMWQMLRNCTPERYAVNKSRMVRLAEYSRDCLQALRADTGIQYEGRTGGTLQLFRTQQQLDGAAKDIAVLREANVPFELLSPAELKNAEPALAAVSHKLTGGLRLPGDETGDCQLFTTRLAALAESLGVKFRYNTPIDGLAIAGGKIAGVQCGSETVRADAYVVALGSYSTNFVANLMKIPVYPLKGYSITAPIVDEAAAPVSTVLDETYKIAITRFDQRIRVGGMAEIVGFDKTLRAARRETLEMCVNDLFPGGGDTSKATFWTGLRPMTPDGTPIVGRTPVSNLFLNTGHGTLGWTMSCGSGQLLADLISGKKPAIQADDLSVHRYLKEVAGQTRPAYA.

3 to 17 (VVILGSGVVGVASAY) contacts FAD.

The protein belongs to the DadA oxidoreductase family. It depends on FAD as a cofactor.

The enzyme catalyses a D-alpha-amino acid + A + H2O = a 2-oxocarboxylate + AH2 + NH4(+). It participates in amino-acid degradation; D-alanine degradation; NH(3) and pyruvate from D-alanine: step 1/1. Its function is as follows. Oxidative deamination of D-amino acids. This chain is D-amino acid dehydrogenase, found in Burkholderia multivorans (strain ATCC 17616 / 249).